Consider the following 451-residue polypeptide: Phosphoglucosamine mutase (451 aa).

The active-site Phosphoserine intermediate is serine 103. The Mg(2+) site is built by serine 103, aspartate 243, aspartate 245, and aspartate 247. Serine 103 is subject to Phosphoserine.

The protein belongs to the phosphohexose mutase family. Mg(2+) is required as a cofactor. Post-translationally, activated by phosphorylation.

It carries out the reaction alpha-D-glucosamine 1-phosphate = D-glucosamine 6-phosphate. Functionally, catalyzes the conversion of glucosamine-6-phosphate to glucosamine-1-phosphate. This is Phosphoglucosamine mutase from Lactobacillus gasseri (strain ATCC 33323 / DSM 20243 / BCRC 14619 / CIP 102991 / JCM 1131 / KCTC 3163 / NCIMB 11718 / NCTC 13722 / AM63).